We begin with the raw amino-acid sequence, 279 residues long: Thymidylate synthase (279 aa).

A dUMP-binding site is contributed by R133–R134. The Nucleophile role is filled by C154. DUMP contacts are provided by residues R178 to D181, N189, and H219 to Y221. Position 181 (D181) interacts with (6R)-5,10-methylene-5,6,7,8-tetrahydrofolate. A278 serves as a coordination point for (6R)-5,10-methylene-5,6,7,8-tetrahydrofolate.

The protein belongs to the thymidylate synthase family. Bacterial-type ThyA subfamily. As to quaternary structure, homodimer.

The protein resides in the cytoplasm. The enzyme catalyses dUMP + (6R)-5,10-methylene-5,6,7,8-tetrahydrofolate = 7,8-dihydrofolate + dTMP. The protein operates within pyrimidine metabolism; dTTP biosynthesis. Functionally, catalyzes the reductive methylation of 2'-deoxyuridine-5'-monophosphate (dUMP) to 2'-deoxythymidine-5'-monophosphate (dTMP) while utilizing 5,10-methylenetetrahydrofolate (mTHF) as the methyl donor and reductant in the reaction, yielding dihydrofolate (DHF) as a by-product. This enzymatic reaction provides an intracellular de novo source of dTMP, an essential precursor for DNA biosynthesis. The sequence is that of Thymidylate synthase from Streptococcus gordonii (strain Challis / ATCC 35105 / BCRC 15272 / CH1 / DL1 / V288).